A 430-amino-acid polypeptide reads, in one-letter code: GTPase Obg (430 aa).

Residues 1-158 (MFVDQVKISL…LDVSLELKLL (158 aa)) enclose the Obg domain. Positions 118 to 145 (KGGRGGRGNSRFATPRNPAPDFSEKGEP) are disordered. Positions 159–329 (ADVGLVGFPS…LLYAIADKLE (171 aa)) constitute an OBG-type G domain. GTP is bound by residues 165–172 (GFPSVGKS), 190–194 (FTTIK), 212–215 (DLPG), 282–285 (NKMD), and 310–312 (STI). Ser-172 and Thr-192 together coordinate Mg(2+). Residues 352 to 430 (KHTPSQDKFT…ILGGEFEFVE (79 aa)) enclose the OCT domain.

Belongs to the TRAFAC class OBG-HflX-like GTPase superfamily. OBG GTPase family. Monomer. Mg(2+) serves as cofactor.

The protein localises to the cytoplasm. In terms of biological role, an essential GTPase which binds GTP, GDP and possibly (p)ppGpp with moderate affinity, with high nucleotide exchange rates and a fairly low GTP hydrolysis rate. Plays a role in control of the cell cycle, stress response, ribosome biogenesis and in those bacteria that undergo differentiation, in morphogenesis control. The sequence is that of GTPase Obg from Staphylococcus aureus (strain bovine RF122 / ET3-1).